The sequence spans 254 residues: Alcohol dehydrogenase 2 (254 aa).

Position 10–33 (10–33) interacts with NAD(+); the sequence is FVAGLGGIGFDTSREIVKRGPKNL. Position 138 (serine 138) interacts with substrate. Tyrosine 151 (proton acceptor) is an active-site residue.

This sequence belongs to the short-chain dehydrogenases/reductases (SDR) family. In terms of assembly, homodimer.

The catalysed reaction is a primary alcohol + NAD(+) = an aldehyde + NADH + H(+). It catalyses the reaction a secondary alcohol + NAD(+) = a ketone + NADH + H(+). This is Alcohol dehydrogenase 2 (Adh2) from Drosophila mojavensis (Fruit fly).